We begin with the raw amino-acid sequence, 803 residues long: Exocyst complex component 6 (803 aa).

It belongs to the SEC15 family. In terms of assembly, the exocyst complex is composed of EXOC1, EXOC2, EXOC3, EXOC4, EXOC5, EXOC6, EXOC7 and EXOC8. Interacts with CNTRL. Interacts with RAB11A in a GTP-dependent manner.

It is found in the cytoplasm. It localises to the perinuclear region. The protein localises to the cell projection. The protein resides in the growth cone. Its subcellular location is the midbody. It is found in the midbody ring. Its function is as follows. Component of the exocyst complex involved in the docking of exocytic vesicles with fusion sites on the plasma membrane. Together with RAB11A, RAB3IP, RAB8A, PARD3, PRKCI, ANXA2, CDC42 and DNMBP promotes transcytosis of PODXL to the apical membrane initiation sites (AMIS), apical surface formation and lumenogenesis. This chain is Exocyst complex component 6 (EXOC6), found in Canis lupus familiaris (Dog).